We begin with the raw amino-acid sequence, 252 residues long: Adenosylcobinamide-GDP ribazoletransferase (252 aa).

The next 6 helical transmembrane spans lie at 29–49 (LYWFPFVGLLLGALLAALGYV), 50–70 (GSLSGWHEFAALLVVLGGIVL), 104–124 (VGSFGALALSGVMLLKWVAVV), 129–149 (FGLFDVVMAGILLARLVQVLL), 166–186 (FVAGAGAPHAFSALLFTLALL), and 194–214 (FPTMLWLLGAALVAGSMVGMV).

Belongs to the CobS family. The cofactor is Mg(2+).

The protein resides in the cell inner membrane. The catalysed reaction is alpha-ribazole + adenosylcob(III)inamide-GDP = adenosylcob(III)alamin + GMP + H(+). The enzyme catalyses alpha-ribazole 5'-phosphate + adenosylcob(III)inamide-GDP = adenosylcob(III)alamin 5'-phosphate + GMP + H(+). Its pathway is cofactor biosynthesis; adenosylcobalamin biosynthesis; adenosylcobalamin from cob(II)yrinate a,c-diamide: step 7/7. In terms of biological role, joins adenosylcobinamide-GDP and alpha-ribazole to generate adenosylcobalamin (Ado-cobalamin). Also synthesizes adenosylcobalamin 5'-phosphate from adenosylcobinamide-GDP and alpha-ribazole 5'-phosphate. This Chlorobium chlorochromatii (strain CaD3) protein is Adenosylcobinamide-GDP ribazoletransferase.